A 36-amino-acid chain; its full sequence is Dermonecrotic toxin LgSicTox-beta-LOXN2 (36 aa).

The protein belongs to the arthropod phospholipase D family. Class II subfamily. Requires Mg(2+) as cofactor. Contains 2 disulfide bonds. As to expression, expressed by the venom gland.

Its subcellular location is the secreted. It catalyses the reaction an N-(acyl)-sphingosylphosphocholine = an N-(acyl)-sphingosyl-1,3-cyclic phosphate + choline. The enzyme catalyses an N-(acyl)-sphingosylphosphoethanolamine = an N-(acyl)-sphingosyl-1,3-cyclic phosphate + ethanolamine. The catalysed reaction is a 1-acyl-sn-glycero-3-phosphocholine = a 1-acyl-sn-glycero-2,3-cyclic phosphate + choline. It carries out the reaction a 1-acyl-sn-glycero-3-phosphoethanolamine = a 1-acyl-sn-glycero-2,3-cyclic phosphate + ethanolamine. Its function is as follows. Dermonecrotic toxins cleave the phosphodiester linkage between the phosphate and headgroup of certain phospholipids (sphingolipid and lysolipid substrates), forming an alcohol (often choline) and a cyclic phosphate. This toxin acts on sphingomyelin (SM). It may also act on ceramide phosphoethanolamine (CPE), lysophosphatidylcholine (LPC) and lysophosphatidylethanolamine (LPE), but not on lysophosphatidylserine (LPS), and lysophosphatidylglycerol (LPG). It acts by transphosphatidylation, releasing exclusively cyclic phosphate products as second products. Induces dermonecrosis, hemolysis, increased vascular permeability, edema, inflammatory response, and platelet aggregation. In Loxosceles gaucho (Spider), this protein is Dermonecrotic toxin LgSicTox-beta-LOXN2.